A 168-amino-acid polypeptide reads, in one-letter code: 6,7-dimethyl-8-ribityllumazine synthase (168 aa).

Residues tryptophan 31, 65–67, and 90–92 contribute to the 5-amino-6-(D-ribitylamino)uracil site; these read SFE and NVI. A (2S)-2-hydroxy-3-oxobutyl phosphate-binding site is contributed by 95–96; sequence ET. Histidine 98 serves as the catalytic Proton donor. Phenylalanine 123 contacts 5-amino-6-(D-ribitylamino)uracil. A (2S)-2-hydroxy-3-oxobutyl phosphate-binding site is contributed by arginine 137.

Belongs to the DMRL synthase family.

It catalyses the reaction (2S)-2-hydroxy-3-oxobutyl phosphate + 5-amino-6-(D-ribitylamino)uracil = 6,7-dimethyl-8-(1-D-ribityl)lumazine + phosphate + 2 H2O + H(+). It participates in cofactor biosynthesis; riboflavin biosynthesis; riboflavin from 2-hydroxy-3-oxobutyl phosphate and 5-amino-6-(D-ribitylamino)uracil: step 1/2. In terms of biological role, catalyzes the formation of 6,7-dimethyl-8-ribityllumazine by condensation of 5-amino-6-(D-ribitylamino)uracil with 3,4-dihydroxy-2-butanone 4-phosphate. This is the penultimate step in the biosynthesis of riboflavin. The sequence is that of 6,7-dimethyl-8-ribityllumazine synthase from Christiangramia forsetii (strain DSM 17595 / CGMCC 1.15422 / KT0803) (Gramella forsetii).